A 312-amino-acid polypeptide reads, in one-letter code: Methionyl-tRNA formyltransferase (312 aa).

Residue 109–112 (SLLP) coordinates (6S)-5,6,7,8-tetrahydrofolate.

Belongs to the Fmt family.

It catalyses the reaction L-methionyl-tRNA(fMet) + (6R)-10-formyltetrahydrofolate = N-formyl-L-methionyl-tRNA(fMet) + (6S)-5,6,7,8-tetrahydrofolate + H(+). Attaches a formyl group to the free amino group of methionyl-tRNA(fMet). The formyl group appears to play a dual role in the initiator identity of N-formylmethionyl-tRNA by promoting its recognition by IF2 and preventing the misappropriation of this tRNA by the elongation apparatus. The chain is Methionyl-tRNA formyltransferase from Listeria monocytogenes serotype 4b (strain CLIP80459).